Reading from the N-terminus, the 63-residue chain is Large ribosomal subunit protein bL32 (63 aa).

Belongs to the bacterial ribosomal protein bL32 family.

This is Large ribosomal subunit protein bL32 from Acholeplasma laidlawii.